A 623-amino-acid chain; its full sequence is MSVANTTAASQDACYISLLGLAEYFRTSQPPNIKKCIQCLQALFTFQPPSKVEARTHLQMGQVLMAYTCNIDLARRHLEQAWSISEPLMNFDDVKFDTASLLAQLHLKTEQSPHAKAMLRRAVELSQNNVYWHCKLLLQLSQIHANDREYSLASDLLAVGAESAEEAGATYLKVLFLLSRAMILMIERKTNDVLALLNSAGQIIDNNIPNPHQKEYLKVFFLVLQVCYYLALGQVKTVKPSLKQLQMSIQTIMAPNWPSDESIFGGNQLEMFVWLPKEQLYVLVYLVTVSHSMMAGYMDKAQKYTEKALTQIEKLKLQEDKSILSVFKVILLEHIVMCRMVMGNRELAIREIAAARDVCLAVPHRSLLKRHSAQLHCLIGLYSMSTSFFEHAERQFLVCVNETGERDLKLFANLNLAIIYLRTKRDADLKQILDAVSTENTHTYSSQALMGGFYYVQGLHAFHKNSFHEAKRFLRETLKMANAEDLNRLTSCSLVLLSHVFLSIGNSKESMNMVTPAMQLASKIPDIHVQLWGSAILKDLHRMSKDVQHEKEAYANHVKYSENLIADQRKCVQSAHHELVNWFQGDPPLTSGASLTHLPVAAAAPEASTSSLQASTAQFGQFY.

TPR repeat units follow at residues Phe96 to Asn129, Gly451 to Glu484, and Ser491 to Ile524.

The protein belongs to the SCC4/mau-2 family. Interacts with Nipped-B to form the cohesin loading complex.

The protein localises to the nucleus. The protein resides in the nucleoplasm. Required for association of the cohesin complex with chromatin during interphase. Plays a role in sister chromatid cohesion and normal progression through prometaphase. The protein is MAU2 chromatid cohesion factor homolog of Drosophila grimshawi (Hawaiian fruit fly).